Consider the following 397-residue polypeptide: Putative gustatory receptor 93c (397 aa).

Residues M1 to A12 are Cytoplasmic-facing. The helical transmembrane segment at L13 to F33 threads the bilayer. Residues D34–Q87 lie on the Extracellular side of the membrane. A helical membrane pass occupies residues C88–Y108. Over E109 to R141 the chain is Cytoplasmic. Residues E142–C162 form a helical membrane-spanning segment. The Extracellular portion of the chain corresponds to Q163 to E179. Residues I180 to V200 traverse the membrane as a helical segment. The Cytoplasmic segment spans residues A201–P266. The chain crosses the membrane as a helical span at residues V267–I287. Over R288–K295 the chain is Extracellular. The chain crosses the membrane as a helical span at residues I296–V316. Residues H317–E371 lie on the Cytoplasmic side of the membrane. Residues V372 to I392 form a helical membrane-spanning segment. At Q393 to L397 the chain is on the extracellular side.

The protein belongs to the insect chemoreceptor superfamily. Gustatory receptor (GR) family. Gr93a subfamily. As to expression, in larvae, is expressed in neurons of the posterior pharyngeal sense organ.

The protein resides in the cell membrane. Functionally, probable gustatory receptor which mediates acceptance or avoidance behavior, depending on its substrates. The chain is Putative gustatory receptor 93c (Gr93c) from Drosophila melanogaster (Fruit fly).